Reading from the N-terminus, the 762-residue chain is PHD finger protein 20-like protein 1 (762 aa).

Tudor domains are found at residues 11–71 (ITFE…LERP) and 85–141 (VDFK…EDAK). Disordered regions lie at residues 178–231 (AKNK…TSSD), 289–359 (AEKK…CIKP), 383–411 (SVIN…RSQR), 536–559 (SLKL…EGTE), and 613–651 (LSGK…QHDY). Basic and acidic residues predominate over residues 193 to 211 (NKDKEERKWLKVPSKKEET). Polar residues-rich tracts occupy residues 319–340 (DISS…SSGK) and 383–398 (SVIN…NSPR). A compositionally biased stretch (basic residues) spans 399-410 (SYKHSQRRRRSQ). A compositionally biased stretch (basic and acidic residues) spans 614 to 632 (SGKKKEKEKEKKEKKEKDH). The segment covering 633–647 (KSKQKKKKKKKKKSK) has biased composition (basic residues).

It is found in the nucleus. Its function is as follows. Is a negative regulator of proteasomal degradation of methylated proteins. Involved in the maintainance of pluripotency of embryonic stem cells. The polypeptide is PHD finger protein 20-like protein 1 (PHF20L1) (Gallus gallus (Chicken)).